Here is a 1062-residue protein sequence, read N- to C-terminus: MSENTTAPSDNITNEQRLPSGPKDDVDTLALTSAQNQANSLRKLDTDANAKALPSITDIPVSDDSDIKRQVGSGFGSNPLHIKDSEAFPHSSIEALKEGMDKVTKQCNDLKTALLSKDTSLTDSVQDLFNSLKVLSHNQSVLENKLDDVMKNQVNTDILVNNLNERLNKLSTMLQNTSKVNHSNLLIENSSNNTSSQHNTSSSRRGPGRPRKDASTSTMNKLVSNAASVNLKSASNQGAPFSPVNITLPTAVVQTSKSKRYFVEPSTKQESLLLSAPSSSRDDADMSLTSVPQRTNNENGKERPSTANSSSITPTPVTPNNLIQIKRKRGRPPKKRTVETMISNSTDTIDKSDASNRIKNEIPINSLLPSSKFHQIPSSPSNPVSQPAPVRTSRSATQEIDIKSLELASLISTNGDPNAEDSNTTDTVHNNVEGKVNVEENKTEKEKIITIKSSSENSGNNTTNNNNTDNVIKFSANSDINSDIRRLMVNDQFSLSYDASGNITVKLPPVSSPAAATAAAAAAVTSEMNRQQRELDKRRDSREKMLVNMKYNDRDKAKSFMESNKKLLKAMKEEERRKRMTSIIHDNHLNLNLNEISTRSKIKSAEKPTTKGSSMSPKPRSASISGISDHQQEGYQPLEQEKLVDIDNEGSNANSDSLKMGLTISAADTVHKVGIQSMLNSGEEAITKENAEYERKTPGDEETTTFVPLENSQPSDTIRKRTAGDDGALDQTENTSISPKKRRTEDHTKGEEDEGERGVGNSGTLATVENVSGDISADLSKGTSSIHNDTESANDSSNGNGNLGLGTESRNTLLTATPIELICREGFFYRRDIPDVPITTGAYLEFKFKAKEEELINSSINEEDYAAKSKHEKMNAHFFKPDIQEETELAFEILSKTTLTEKYVNSLEYFLMEFRWENKLVGLGLKLRESKRTWQRRKALFALFEFWRDQSRDKRRFHNYTILHAVKEMENYRIFINRSVSWFYNHITLLKMILYDLCDNVTTQWREWMFPHNETLPALGQDGINEDNLNETIDNMLIFDFLDDGSENNQVKYSRIIPPDIR.

Polar residues predominate over residues 1–17 (MSENTTAPSDNITNEQR). Disordered regions lie at residues 1-27 (MSEN…DDVD), 188-217 (ENSS…ASTS), 267-337 (TKQE…KKRT), 370-398 (SSKF…SATQ), 595-634 (EIST…QQEG), and 681-804 (SGEE…GNLG). Serine 2 bears the N-acetylserine mark. Residues 189–205 (NSSNNTSSQHNTSSSRR) are compositionally biased toward low complexity. Polar residues-rich tracts occupy residues 267 to 279 (TKQE…APSS), 287 to 298 (SLTSVPQRTNNE), and 305 to 323 (STAN…NNLI). Residues 325–335 (IKRKRGRPPKK) are compositionally biased toward basic residues. Polar residues-rich tracts occupy residues 370-385 (SSKF…NPVS) and 610-629 (TKGS…GISD). Residues serine 378, serine 379, serine 628, and serine 681 each carry the phosphoserine modification. The segment covering 685-699 (AITKENAEYERKTPG) has biased composition (basic and acidic residues). At threonine 697 the chain carries Phosphothreonine. Over residues 704-716 (TTFVPLENSQPSD) the composition is skewed to polar residues. A Phosphoserine; by ATM or ATR modification is found at serine 712. Residue serine 738 is modified to Phosphoserine. The segment covering 781–793 (KGTSSIHNDTESA) has biased composition (polar residues). A Phosphothreonine modification is found at threonine 817.

As to quaternary structure, interacts with RFM1. This interaction is required to recruit HST1.

The protein localises to the nucleus. DNA-binding protein that specifically binds the regulatory region of middle sporulation genes (MSE). Required for the repression of middle sporulation genes during vegetative growth. Represses expression via the recruitment of histone deacetylase HST1. The protein is Suppressor of mar1-1 protein (SUM1) of Saccharomyces cerevisiae (strain ATCC 204508 / S288c) (Baker's yeast).